We begin with the raw amino-acid sequence, 89 residues long: Dolichol-phosphate mannose synthase subunit 3 (89 aa).

2 helical membrane-spanning segments follow: residues 7-27 (ILSL…AAII) and 33-53 (WLLP…MVGV).

The protein belongs to the DPM3 family. As to quaternary structure, component of the dolichol-phosphate mannose (DPM) synthase complex composed of DPMS1, DPMS2 and DPMS3; in the complex interacts directly with DPMS1 and DPMS2.

The protein localises to the endoplasmic reticulum membrane. It functions in the pathway protein modification; protein glycosylation. Functionally, regulates the biosynthesis of dolichol phosphate-mannose. Regulatory subunit of the dolichol-phosphate mannose (DPM) synthase complex; essential for the ER localization and stable expression of DPMS1. This Arabidopsis thaliana (Mouse-ear cress) protein is Dolichol-phosphate mannose synthase subunit 3.